Consider the following 353-residue polypeptide: MACCLSEEAKEQKRINQEIERQLRKDKRDARRELKLLLLGTGESGKSTFIKQMRIIHGAGYSDEDKRGFIKLVFQNIFMAMQSMIRAMDLLQISYGDSANIEHADLVRSVDYESVTTFEEPYVTAMNSLWQDTGIQHCYDRRREYQLTDSAKYYLTDLDRIAAKDYVSTLQDILRVRAPTTGIIEYPFDLEEIRFRMVDVGGQRSERRKWIHCFENVTSIIFLVALSEYDQILFESDNENRMEESKALFKTIITYPWFQHSSVILFLNKKDLLEEKIMYSHLVDYFPEYDGPRKDAIAAREFILRMFVELNPDPEKIIYSHFTCATDTENIRFVFAAVKDTILQLNLKEYNLV.

2 S-palmitoyl cysteine lipidation sites follow: cysteine 3 and cysteine 4. The G-alpha domain maps to 32 to 353; the sequence is RELKLLLLGT…QLNLKEYNLV (322 aa). Residues 35-48 form a G1 motif region; the sequence is KLLLLGTGESGKST. GTP is bound by residues 40–47, 174–180, 199–203, 268–271, and alanine 325; these read GTGESGKS, LRVRAPT, DVGGQ, and NKKD. Positions 47 and 180 each coordinate Mg(2+). The tract at residues 172–180 is G2 motif; it reads DILRVRAPT. Residues 195–204 are G3 motif; it reads FRMVDVGGQR. The tract at residues 264–271 is G4 motif; it reads ILFLNKKD. Residues 323–328 are G5 motif; sequence TCATDT.

This sequence belongs to the G-alpha family. G(q) subfamily. G proteins are composed of 3 units; alpha, beta and gamma. The alpha chain contains the guanine nucleotide binding site.

Its function is as follows. Guanine nucleotide-binding proteins (G proteins) are involved as modulators or transducers in various transmembrane signaling systems. The sequence is that of Guanine nucleotide-binding protein G(q) subunit alpha from Homarus americanus (American lobster).